A 288-amino-acid polypeptide reads, in one-letter code: Protein RepA (288 aa).

It belongs to the initiator RepB protein family.

Its function is as follows. This protein is essential for plasmid replication; it is involved in copy control functions. This chain is Protein RepA (repA), found in Escherichia coli.